We begin with the raw amino-acid sequence, 166 residues long: Lipoprotein signal peptidase (166 aa).

The next 4 membrane-spanning stretches (helical) occupy residues 9-29 (AGGSLAPWLGVAVIVILFDQL), 37-57 (VFAYGSSHAIAPFFNLVLVYN), 71-91 (WQRWAFTALGVAAAVLICYLL), and 100-120 (FCTALALIMGGAIGNVIDRLL). Active-site residues include Asp-126 and Asp-144. The helical transmembrane segment at 136-156 (HWPAFNLADSAITIGAALLVF) threads the bilayer.

This sequence belongs to the peptidase A8 family.

It is found in the cell inner membrane. It carries out the reaction Release of signal peptides from bacterial membrane prolipoproteins. Hydrolyzes -Xaa-Yaa-Zaa-|-(S,diacylglyceryl)Cys-, in which Xaa is hydrophobic (preferably Leu), and Yaa (Ala or Ser) and Zaa (Gly or Ala) have small, neutral side chains.. It functions in the pathway protein modification; lipoprotein biosynthesis (signal peptide cleavage). Its function is as follows. This protein specifically catalyzes the removal of signal peptides from prolipoproteins. This is Lipoprotein signal peptidase from Paraburkholderia phymatum (strain DSM 17167 / CIP 108236 / LMG 21445 / STM815) (Burkholderia phymatum).